The primary structure comprises 437 residues: MANPIVAVVGRPNVGKSTLFNRIAGERISIVEDTPGVTRDRIYAHAEWLGKHFSMIDTGGIEISDQPLLTQIRQQAEIAIDEADVIIFVADVENGVTDADEQVARILYRSNKPVVLAVNKVDNPERRSDIYDYYSLGLGEPYAVSSVHGIGMGDLLDAVIKEFPDNAANDEDDSIHFSFIGRPNVGKSSLVNAILGENRVIVSNVAGTTRDAINTQFETADGQKFTMVDTAGIRKKGKIYENTERYSLMRSMRAIDDSDVVLVVLNAEEGIRELDKHIAGYAHEAGCGVIIVVNKWDTLKEKDHRTMTDFTNLIRQEFQYLSYAPIIFVSAKTKQRLNQLPGLIEEVYQHHRQRIQSAVLNDVLMDAIAANPTPTQNGRRLRVYYGTQVATEPPTFVIFVNDPELMHFSYERYLENQIRKAFDFSGTPIHLIKRQRQ.

2 consecutive EngA-type G domains span residues proline 4 to alanine 167 and isoleucine 175 to arginine 352. GTP is bound by residues glycine 10–serine 17, aspartate 57–isoleucine 61, asparagine 119–aspartate 122, glycine 181–serine 188, aspartate 229–isoleucine 233, and asparagine 294–aspartate 297. Residues glutamine 353 to glutamine 437 form the KH-like domain.

This sequence belongs to the TRAFAC class TrmE-Era-EngA-EngB-Septin-like GTPase superfamily. EngA (Der) GTPase family. Associates with the 50S ribosomal subunit.

In terms of biological role, GTPase that plays an essential role in the late steps of ribosome biogenesis. The polypeptide is GTPase Der (Limosilactobacillus reuteri (strain DSM 20016) (Lactobacillus reuteri)).